A 184-amino-acid polypeptide reads, in one-letter code: Ribosome-recycling factor (184 aa).

This sequence belongs to the RRF family.

Its subcellular location is the cytoplasm. Responsible for the release of ribosomes from messenger RNA at the termination of protein biosynthesis. May increase the efficiency of translation by recycling ribosomes from one round of translation to another. This Borrelia hermsii (strain HS1 / DAH) protein is Ribosome-recycling factor.